The chain runs to 491 residues: NADH-quinone oxidoreductase subunit N 1 (491 aa).

Transmembrane regions (helical) follow at residues 9-29, 38-58, 76-96, 104-124, 126-146, 161-181, 211-231, 246-266, 276-296, 304-324, 329-349, 375-395, 410-432, and 461-481; these read IAAPLLALAAGALLILLLDLL, PMYVAAVGAVLVAGWYLVPLW, FAAVYGLVLLGAALLAILLSF, SGYLALLLWAAMGMVLLGGAG, LMVIFLGIELLSLALYVMIAF, FVLGSVAAAFLIFGFALIYGA, VGVGLAIVGLAFKMALVPFHI, AFMAIGTKAAAFAAMARLLVA, FLLPLSILAFASMMLGATVGI, LMAYSGIANAGYLIMAIPGLG, SAAAYYLAAYGFATMGVFAVV, VGVCLAVLFFGLIGVPPTGGF, AWIVLTGLILSTGISAYVYLKVI, and VVLAIATAGTLVLGVLPGPVS.

This sequence belongs to the complex I subunit 2 family. In terms of assembly, NDH-1 is composed of 14 different subunits. Subunits NuoA, H, J, K, L, M, N constitute the membrane sector of the complex.

It localises to the cell membrane. The catalysed reaction is a quinone + NADH + 5 H(+)(in) = a quinol + NAD(+) + 4 H(+)(out). In terms of biological role, NDH-1 shuttles electrons from NADH, via FMN and iron-sulfur (Fe-S) centers, to quinones in the respiratory chain. The immediate electron acceptor for the enzyme in this species is believed to be a menaquinone. Couples the redox reaction to proton translocation (for every two electrons transferred, four hydrogen ions are translocated across the cytoplasmic membrane), and thus conserves the redox energy in a proton gradient. The polypeptide is NADH-quinone oxidoreductase subunit N 1 (Symbiobacterium thermophilum (strain DSM 24528 / JCM 14929 / IAM 14863 / T)).